Reading from the N-terminus, the 409-residue chain is tRNA (guanine-N(7)-)-methyltransferase non-catalytic subunit wuho (409 aa).

The disordered stretch occupies residues 48–72; it reads DADSDSDEESTQQPQKPPTNGNGTA. The segment covering 58–72 has biased composition (polar residues); the sequence is TQQPQKPPTNGNGTA. WD repeat units lie at residues 72-111, 122-161, 167-206, and 210-252; these read ADNVQIVALEVHEGKSLLAVATSDKSLFLFAIDPEGDETN, MVSRTSSCMKFAASGKFLVVCDKGGDCYRYDCDDDDCKKP, GHMSQVLDVLVPDNERFIITSDRDEKIRVTNHPDCHSIET, and GHGE…EVAR.

The protein belongs to the WD repeat TRM82 family. In terms of assembly, forms a heterodimer with the catalytic subunit.

The protein localises to the nucleus. The protein operates within tRNA modification; N(7)-methylguanine-tRNA biosynthesis. Functionally, required for the formation of N(7)-methylguanine at position 46 (m7G46) in tRNA. In the complex, it is required to stabilize and induce conformational changes of the catalytic subunit. The sequence is that of tRNA (guanine-N(7)-)-methyltransferase non-catalytic subunit wuho from Aedes aegypti (Yellowfever mosquito).